The following is a 513-amino-acid chain: Maturase K (513 aa).

It belongs to the intron maturase 2 family. MatK subfamily.

The protein resides in the plastid. The protein localises to the chloroplast. Its function is as follows. Usually encoded in the trnK tRNA gene intron. Probably assists in splicing its own and other chloroplast group II introns. The protein is Maturase K of Phaseolus vulgaris (Kidney bean).